The chain runs to 348 residues: Dihydroorotase (348 aa).

The Zn(2+) site is built by His-17 and His-19. Substrate-binding positions include 19–21 (HLR) and Asn-45. Lys-103, His-140, and His-178 together coordinate Zn(2+). Residue Lys-103 is modified to N6-carboxylysine. Substrate is bound at residue His-140. Position 223 (Leu-223) interacts with substrate. Position 251 (Asp-251) interacts with Zn(2+). The active site involves Asp-251. Substrate is bound by residues His-255 and Ala-267.

The protein belongs to the metallo-dependent hydrolases superfamily. DHOase family. Class II DHOase subfamily. Homodimer. Zn(2+) is required as a cofactor.

It catalyses the reaction (S)-dihydroorotate + H2O = N-carbamoyl-L-aspartate + H(+). It functions in the pathway pyrimidine metabolism; UMP biosynthesis via de novo pathway; (S)-dihydroorotate from bicarbonate: step 3/3. Its function is as follows. Catalyzes the reversible cyclization of carbamoyl aspartate to dihydroorotate. In Shigella flexneri serotype 5b (strain 8401), this protein is Dihydroorotase.